A 289-amino-acid chain; its full sequence is Release factor glutamine methyltransferase (289 aa).

Residues 122–126 (GVGSG), aspartate 145, tryptophan 174, and asparagine 189 each bind S-adenosyl-L-methionine. A substrate-binding site is contributed by 189 to 192 (NPPY).

Belongs to the protein N5-glutamine methyltransferase family. PrmC subfamily.

It carries out the reaction L-glutaminyl-[peptide chain release factor] + S-adenosyl-L-methionine = N(5)-methyl-L-glutaminyl-[peptide chain release factor] + S-adenosyl-L-homocysteine + H(+). In terms of biological role, methylates the class 1 translation termination release factors RF1/PrfA and RF2/PrfB on the glutamine residue of the universally conserved GGQ motif. The chain is Release factor glutamine methyltransferase from Caulobacter vibrioides (strain ATCC 19089 / CIP 103742 / CB 15) (Caulobacter crescentus).